The following is a 126-amino-acid chain: Holo-[acyl-carrier-protein] synthase (126 aa).

Mg(2+) is bound by residues aspartate 9 and glutamate 58.

Belongs to the P-Pant transferase superfamily. AcpS family. The cofactor is Mg(2+).

It is found in the cytoplasm. The catalysed reaction is apo-[ACP] + CoA = holo-[ACP] + adenosine 3',5'-bisphosphate + H(+). Its function is as follows. Transfers the 4'-phosphopantetheine moiety from coenzyme A to a Ser of acyl-carrier-protein. The protein is Holo-[acyl-carrier-protein] synthase of Shewanella denitrificans (strain OS217 / ATCC BAA-1090 / DSM 15013).